Reading from the N-terminus, the 162-residue chain is Putative 4-hydroxy-4-methyl-2-oxoglutarate aldolase (162 aa).

Residues 75-78 (GDML) and arginine 97 contribute to the substrate site. Aspartate 98 contacts a divalent metal cation.

Belongs to the class II aldolase/RraA-like family. Homotrimer. The cofactor is a divalent metal cation.

The enzyme catalyses 4-hydroxy-4-methyl-2-oxoglutarate = 2 pyruvate. The catalysed reaction is oxaloacetate + H(+) = pyruvate + CO2. Its function is as follows. Catalyzes the aldol cleavage of 4-hydroxy-4-methyl-2-oxoglutarate (HMG) into 2 molecules of pyruvate. Also contains a secondary oxaloacetate (OAA) decarboxylase activity due to the common pyruvate enolate transition state formed following C-C bond cleavage in the retro-aldol and decarboxylation reactions. The chain is Putative 4-hydroxy-4-methyl-2-oxoglutarate aldolase from Azotobacter vinelandii (strain DJ / ATCC BAA-1303).